The sequence spans 64 residues: Large ribosomal subunit protein bL33c (64 aa).

It belongs to the bacterial ribosomal protein bL33 family.

It localises to the plastid. The protein localises to the chloroplast. The sequence is that of Large ribosomal subunit protein bL33c from Huperzia lucidula (Shining clubmoss).